Reading from the N-terminus, the 156-residue chain is Ribosomal RNA large subunit methyltransferase H (156 aa).

Residues Leu73, Gly104, and 123-128 (VSSLTL) each bind S-adenosyl-L-methionine.

The protein belongs to the RNA methyltransferase RlmH family. In terms of assembly, homodimer.

It is found in the cytoplasm. The enzyme catalyses pseudouridine(1915) in 23S rRNA + S-adenosyl-L-methionine = N(3)-methylpseudouridine(1915) in 23S rRNA + S-adenosyl-L-homocysteine + H(+). Specifically methylates the pseudouridine at position 1915 (m3Psi1915) in 23S rRNA. In Paraburkholderia xenovorans (strain LB400), this protein is Ribosomal RNA large subunit methyltransferase H.